The sequence spans 83 residues: Small ribosomal subunit protein bS16 (83 aa).

Belongs to the bacterial ribosomal protein bS16 family.

The protein is Small ribosomal subunit protein bS16 of Borrelia turicatae (strain 91E135).